Reading from the N-terminus, the 162-residue chain is Cytochrome c-type biogenesis protein CcmE (162 aa).

Residues 1–7 (MTRKQRR) lie on the Cytoplasmic side of the membrane. A helical; Signal-anchor for type II membrane protein membrane pass occupies residues 8 to 28 (LTMIGGALVVLGIAAALVLNA). Residues 29–162 (LRDSIVFFST…EASSKQEVSQ (134 aa)) are Periplasmic-facing. Heme is bound by residues His-122 and Tyr-126. Positions 140-162 (HWKDDYGAQPGAAEASSKQEVSQ) are disordered.

It belongs to the CcmE/CycJ family.

Its subcellular location is the cell inner membrane. In terms of biological role, heme chaperone required for the biogenesis of c-type cytochromes. Transiently binds heme delivered by CcmC and transfers the heme to apo-cytochromes in a process facilitated by CcmF and CcmH. The chain is Cytochrome c-type biogenesis protein CcmE from Nitrobacter winogradskyi (strain ATCC 25391 / DSM 10237 / CIP 104748 / NCIMB 11846 / Nb-255).